The primary structure comprises 431 residues: Adenylosuccinate synthetase (431 aa).

Residues 13–19 and 41–43 contribute to the GTP site; these read GDEGKGK and GHT. Catalysis depends on Asp14, which acts as the Proton acceptor. Positions 14 and 41 each coordinate Mg(2+). IMP is bound by residues 14 to 17, 39 to 42, Thr130, Arg144, Gln225, Thr240, and Arg304; these read DEGK and NAGH. His42 acts as the Proton donor in catalysis. 300–306 serves as a coordination point for substrate; that stretch reads ATTGRKR. Residues Arg306, 332-334, and 415-417 each bind GTP; these read KLD and STG.

The protein belongs to the adenylosuccinate synthetase family. As to quaternary structure, homodimer. It depends on Mg(2+) as a cofactor.

The protein localises to the cytoplasm. The enzyme catalyses IMP + L-aspartate + GTP = N(6)-(1,2-dicarboxyethyl)-AMP + GDP + phosphate + 2 H(+). Its pathway is purine metabolism; AMP biosynthesis via de novo pathway; AMP from IMP: step 1/2. In terms of biological role, plays an important role in the de novo pathway of purine nucleotide biosynthesis. Catalyzes the first committed step in the biosynthesis of AMP from IMP. This Shewanella denitrificans (strain OS217 / ATCC BAA-1090 / DSM 15013) protein is Adenylosuccinate synthetase.